The primary structure comprises 470 residues: Glutamate--tRNA ligase 1 (470 aa).

The 'HIGH' region signature appears at 15-25; it reads PSPTGTMHIGT. A 'KMSKS' region motif is present at residues 241–245; that stretch reads KLSKR. K244 provides a ligand contact to ATP.

It belongs to the class-I aminoacyl-tRNA synthetase family. Glutamate--tRNA ligase type 1 subfamily. In terms of assembly, monomer.

It is found in the cytoplasm. It catalyses the reaction tRNA(Glu) + L-glutamate + ATP = L-glutamyl-tRNA(Glu) + AMP + diphosphate. Functionally, catalyzes the attachment of glutamate to tRNA(Glu) in a two-step reaction: glutamate is first activated by ATP to form Glu-AMP and then transferred to the acceptor end of tRNA(Glu). The protein is Glutamate--tRNA ligase 1 of Jannaschia sp. (strain CCS1).